Here is a 128-residue protein sequence, read N- to C-terminus: Gastrotropin (128 aa).

An N-acetylalanine modification is found at alanine 2.

It belongs to the calycin superfamily. Fatty-acid binding protein (FABP) family. Expressed in ileum.

The protein resides in the cytoplasm. The protein localises to the membrane. Binds to bile acids and is involved in enterohepatic bile acid metabolism. Required for efficient apical to basolateral transport of conjugated bile acids in ileal enterocytes. Stimulates gastric acid and pepsinogen secretion. The sequence is that of Gastrotropin (FABP6) from Oryctolagus cuniculus (Rabbit).